The chain runs to 375 residues: Putative glutamate--cysteine ligase 2 (375 aa).

It belongs to the glutamate--cysteine ligase type 2 family. YbdK subfamily.

The enzyme catalyses L-cysteine + L-glutamate + ATP = gamma-L-glutamyl-L-cysteine + ADP + phosphate + H(+). Functionally, ATP-dependent carboxylate-amine ligase which exhibits weak glutamate--cysteine ligase activity. The chain is Putative glutamate--cysteine ligase 2 from Azoarcus sp. (strain BH72).